The primary structure comprises 454 residues: Probable ECA polymerase (454 aa).

11 helical membrane passes run 6 to 26 (FSGL…LTWF), 37 to 57 (VFFS…TSIL), 63 to 83 (VAVV…CFYA), 122 to 142 (MMAV…FLLF), 157 to 177 (GVAL…VYFL), 183 to 203 (AWLF…MIVG), 209 to 229 (IIIA…ISPG), 230 to 250 (MLAA…LKRY), 343 to 363 (LVVM…GLII), 380 to 400 (YKAA…IVLA), and 411 to 431 (VIFF…IYWL).

This sequence belongs to the WzyE family. Probably part of a complex composed of WzxE, WzyE and WzzE.

The protein resides in the cell inner membrane. Its pathway is bacterial outer membrane biogenesis; enterobacterial common antigen biosynthesis. Its function is as follows. Probably involved in the polymerization of enterobacterial common antigen (ECA) trisaccharide repeat units. The sequence is that of Probable ECA polymerase from Cronobacter sakazakii (strain ATCC BAA-894) (Enterobacter sakazakii).